The following is a 433-amino-acid chain: sn-glycerol-3-phosphate-binding periplasmic protein UgpB (433 aa).

The N-terminal stretch at 1 to 25 (MFTRLITTSALTGAIALTIGSQAFA) is a signal peptide. Residues Tyr-67, Asp-91, Ser-146, Ser-273, Gly-307, Tyr-346, and Arg-397 each coordinate sn-glycerol 3-phosphate.

This sequence belongs to the bacterial solute-binding protein 1 family. The complex is composed of two ATP-binding proteins (UgpC), two transmembrane proteins (UgpA and UgpE) and a solute-binding protein (UgpB).

It localises to the periplasm. Its function is as follows. Part of the ABC transporter complex UgpBAEC involved in sn-glycerol-3-phosphate (G3P) import. Binds G3P. The protein is sn-glycerol-3-phosphate-binding periplasmic protein UgpB (ugpB) of Brucella melitensis biotype 1 (strain ATCC 23456 / CCUG 17765 / NCTC 10094 / 16M).